Reading from the N-terminus, the 225-residue chain is Uracil-DNA glycosylase (225 aa).

D65 serves as the catalytic Proton acceptor.

It belongs to the uracil-DNA glycosylase (UDG) superfamily. UNG family.

It is found in the cytoplasm. The catalysed reaction is Hydrolyzes single-stranded DNA or mismatched double-stranded DNA and polynucleotides, releasing free uracil.. Its function is as follows. Excises uracil residues from the DNA which can arise as a result of misincorporation of dUMP residues by DNA polymerase or due to deamination of cytosine. In Bacillus cereus (strain G9842), this protein is Uracil-DNA glycosylase.